The primary structure comprises 262 residues: Transcription factor of morphogenesis MCM1 (262 aa).

Disordered stretches follow at residues 1 to 62 and 140 to 262; these read MAIK…ERRK and EEGL…QQYQ. Over residues 17–35 the composition is skewed to low complexity; the sequence is NSHSTNNNNNSNNSNSNNN. An MADS-box domain is found at 58–118; it reads KERRKIEIKF…GLVYTFTTPK (61 aa). Polar residues predominate over residues 150–170; it reads QSDGNTGDSPDQSPAPATNPN. Composition is skewed to low complexity over residues 182 to 198, 224 to 239, and 249 to 262; these read QQQQQQQQQAQQQAQQQ, PQQQGQHQPGIPLQGG, and NIQNNNIPNQQQYQ.

In terms of assembly, interacts with AHR1.

Its subcellular location is the nucleus. In terms of biological role, transcription factor that is recruited by AHR1 to the promoters of genes involved in biofilm formation, which include several key adhesion genes. Plays an important role in cell adhesion, hyphal growth and virulence. Implicated in the regulation of opaque-phase-specific gene expression. The sequence is that of Transcription factor of morphogenesis MCM1 (MCM1) from Candida albicans (strain SC5314 / ATCC MYA-2876) (Yeast).